The following is a 125-amino-acid chain: Neuropeptide B (125 aa).

An N-terminal signal peptide occupies residues methionine 1–alanine 24. The tract at residues arginine 54 to glutamate 73 is disordered. Residues serine 56–alanine 125 constitute a propeptide that is removed on maturation.

It belongs to the neuropeptide B/W family. Widely expressed in the central nervous system. High levels are found in substantia nigra, hypothalamus, hippocampus, spinal cord, placenta and fetal brain; lower levels are found in testis, uterus and ovary. Also detected at high levels in colorectal adenocarcinoma.

It localises to the secreted. Functionally, may be involved in the regulation of feeding, neuroendocrine system, memory, learning and in the afferent pain pathway. In Homo sapiens (Human), this protein is Neuropeptide B (NPB).